The primary structure comprises 216 residues: Probable nicotinate-nucleotide adenylyltransferase (216 aa).

This sequence belongs to the NadD family.

It carries out the reaction nicotinate beta-D-ribonucleotide + ATP + H(+) = deamido-NAD(+) + diphosphate. It participates in cofactor biosynthesis; NAD(+) biosynthesis; deamido-NAD(+) from nicotinate D-ribonucleotide: step 1/1. Its function is as follows. Catalyzes the reversible adenylation of nicotinate mononucleotide (NaMN) to nicotinic acid adenine dinucleotide (NaAD). The polypeptide is Probable nicotinate-nucleotide adenylyltransferase (Buchnera aphidicola subsp. Schizaphis graminum (strain Sg)).